We begin with the raw amino-acid sequence, 499 residues long: Taxadiene 5-alpha hydroxylase (499 aa).

The helical; Signal-anchor transmembrane segment at 22-42 (TESFSIALSAIAGILLLLLLF) threads the bilayer. Cys445 provides a ligand contact to heme.

This sequence belongs to the cytochrome P450 family. It depends on heme as a cofactor.

Its subcellular location is the membrane. It carries out the reaction taxa-4(5),11(12)-diene + reduced [NADPH--hemoprotein reductase] + O2 = taxa-4(20),11-dien-5alpha-ol + oxidized [NADPH--hemoprotein reductase] + H2O + H(+). It participates in alkaloid biosynthesis; taxol biosynthesis; taxa-4(20),11-dien-5alpha-ol from geranylgeranyl diphosphate: step 2/2. Catalyzes the first oxygenation step of taxol biosynthesis. Can use both taxa-4(5),11(12)-diene and taxa-4(20),11(12)-diene as substrate. The sequence is that of Taxadiene 5-alpha hydroxylase from Taxus cuspidata (Japanese yew).